Consider the following 166-residue polypeptide: Peptidyl-prolyl cis-trans isomerase-like 1 (166 aa).

In terms of domain architecture, PPIase cyclophilin-type spans 10–164 (QPPNVYLETS…DDVKILKAYP (155 aa)). Cyclosporin A contacts are provided by residues 54-65 (HRIIKDFMIQGG), 70-71 (TG), 99-104 (AMANAG), 109-113 (GSQFF), threonine 119, and lysine 125. Serine 149 is modified (phosphoserine).

Belongs to the cyclophilin-type PPIase family. PPIL1 subfamily. Identified in the spliceosome C complex. Interacts with SNW1/SKIP. Interacts with CDC40/PRP17; this interaction leads to CDC40 isomerization. Interacts with RBM22.

It localises to the nucleus. The catalysed reaction is [protein]-peptidylproline (omega=180) = [protein]-peptidylproline (omega=0). Its activity is regulated as follows. Inhibited by Cyclosporin A. Functionally, involved in pre-mRNA splicing as component of the spliceosome. PPIases accelerate the folding of proteins. It catalyzes the cis-trans isomerization of proline imidic peptide bonds in oligopeptides. Catalyzes prolyl peptide bond isomerization in CDC40/PRP17. Plays an important role in embryonic brain development; this function is independent of its isomerase activity. The protein is Peptidyl-prolyl cis-trans isomerase-like 1 (Ppil1) of Mus musculus (Mouse).